The following is a 567-amino-acid chain: Low-affinity glucose transporter HXT3 (567 aa).

Residues 1–29 (MNSTPDLISPQKSSENSNADLPSNSSQVM) show a composition bias toward polar residues. Residues 1-30 (MNSTPDLISPQKSSENSNADLPSNSSQVMN) are disordered. Residues 1 to 57 (MNSTPDLISPQKSSENSNADLPSNSSQVMNMPEEKGVQDDFQAEADQVLTNPNTGKG) are Cytoplasmic-facing. Ser23 carries the post-translational modification Phosphoserine. A helical transmembrane segment spans residues 58–78 (AYVTVSICCVMVAFGGFVFGW). Over 79-113 (DTGTISGFVAQTDFLRRFGMKHKDGSYYLSKVRTG) the chain is Extracellular. Residues 114–134 (LIVSIFNIGCAIGGIILAKLG) form a helical membrane-spanning segment. Residues 135-140 (DMYGRK) lie on the Cytoplasmic side of the membrane. Residues 141-161 (MGLIVVVVIYIIGIIIQIASI) traverse the membrane as a helical segment. The Extracellular segment spans residues 162–171 (NKWYQYFIGR). The helical transmembrane segment at 172-192 (IISGLGVGGIAVLSPMLISEV) threads the bilayer. The Cytoplasmic portion of the chain corresponds to 193–198 (APKEMR). Residues 199–219 (GTLVSCYQLMITLGIFLGYCT) form a helical membrane-spanning segment. The Extracellular portion of the chain corresponds to 220-233 (NFGTKNYSNSVQWR). Residue Asn225 is glycosylated (N-linked (GlcNAc...) asparagine). The helical transmembrane segment at 234-254 (VPLGLCFAWALFMIGGMTFVP) threads the bilayer. The Cytoplasmic segment spans residues 255 to 337 (ESPRYLVEAG…IQSLQQLTGD (83 aa)). Residues 338–354 (NYFFYYGTTVFNAVGMS) traverse the membrane as a helical segment. Residues 355 to 360 (DSFETS) are Extracellular-facing. Residues 361–378 (IVFGVVNFFSTCCSLYTV) form a helical membrane-spanning segment. Residues 379–385 (DRFGRRN) lie on the Cytoplasmic side of the membrane. A helical membrane pass occupies residues 386 to 406 (CLLYGAIGMVCCYVVYASVGV). The Extracellular portion of the chain corresponds to 407–428 (TRLWPNGEGNGSSKGAGNCMIV). Asn416 carries an N-linked (GlcNAc...) asparagine glycan. A helical membrane pass occupies residues 429–449 (FACFYIFCFATTWAPIAYVVI). Residues 450–466 (SETFPLRVKSKAMSIAT) lie on the Cytoplasmic side of the membrane. The helical transmembrane segment at 467-487 (AANWLWGFLIGFFTPFITGAI) threads the bilayer. A topological domain (extracellular) is located at residue Asn488. A helical membrane pass occupies residues 489 to 509 (FYYGYVFMGCMVFAYFYVFFF). Residues 510-567 (VPETKGLTLEEVNDMYAEGVLPWKSASWVPTSQRGANYDADALMHDDQPFYKKMFGKK) are Cytoplasmic-facing.

The protein belongs to the major facilitator superfamily. Sugar transporter (TC 2.A.1.1) family.

It is found in the membrane. Low-affinity glucose transporter. The protein is Low-affinity glucose transporter HXT3 (HXT3) of Saccharomyces cerevisiae (strain ATCC 204508 / S288c) (Baker's yeast).